Here is a 32-residue protein sequence, read N- to C-terminus: Dermatoxin-J3 (32 aa).

Position 32 is a glutamine amide (Gln-32).

In terms of tissue distribution, expressed by the skin glands.

It localises to the secreted. Its function is as follows. Antimicrobial peptide. The protein is Dermatoxin-J3 of Phasmahyla jandaia (Jandaia leaf frog).